A 77-amino-acid chain; its full sequence is Small ribosomal subunit protein bS18 (77 aa).

This sequence belongs to the bacterial ribosomal protein bS18 family. Part of the 30S ribosomal subunit. Forms a tight heterodimer with protein bS6.

Functionally, binds as a heterodimer with protein bS6 to the central domain of the 16S rRNA, where it helps stabilize the platform of the 30S subunit. In Lactobacillus gasseri (strain ATCC 33323 / DSM 20243 / BCRC 14619 / CIP 102991 / JCM 1131 / KCTC 3163 / NCIMB 11718 / NCTC 13722 / AM63), this protein is Small ribosomal subunit protein bS18.